Here is a 74-residue protein sequence, read N- to C-terminus: Alpha-conotoxin GeXIVA (74 aa).

Positions Met1–Ala22 are cleaved as a signal peptide. Residues Val23–Lys46 constitute a propeptide that is removed on maturation. An interacts with alpha-9-alpha-10 (CHRNA9-CHRNA10) nAChR region spans residues Arg56–Arg64.

It belongs to the conotoxin O1 superfamily. The native disulfide bond pairing has not been studied. Three isomers may exist: the bead isomer (I-II; III-IV), the globular isomer (I-III; II-IV), the ribbon isomer (I-IV; II-III). They have all been synthesized and their activity tested. All of them show similar potency on alpha-9-alpha-10 (CHRNA9-CHRNA10) nAChR, showing that disulfide bonds does not significantly affect their activity. In addition, removal of disulfide bonds does not affect the activity on alpha-9-alpha-10 (CHRNA9-CHRNA10) nAChR either. As to expression, expressed by the venom duct.

Its subcellular location is the secreted. Its function is as follows. Alpha-conotoxins act on postsynaptic membranes, they bind to the nicotinic acetylcholine receptors (nAChR) and thus inhibit them. This toxin is very potent on alpha-9-alpha-10/CHRNA9-CHRNA10 nAChR (IC(50)=4.61-12 nM for the bead isomer (I-II; III-IV), IC(50)=7-16 nM for the ribbon isomer (I-IV; II-III) and IC(50)=22.7 nM for the globular isomer (I-III; II-IV)). The bead isomer also shows a weak inhibition on other nAChRs (alpha-1-beta-1-delta-epsilon/CHRNA1-CHRNB1-CHRND-CHRNE, alpha-7/CHRNA7, alpha-6/alpha-3-beta-2-beta-3 (CHRNA6/CHRNA3-CHRNB2-CHRNB3), alpha-3-beta-2/CHRNA3-CHRNB2, alpha-2-beta-2/CHRNA2-CHRNB2, alpha-6/alpha-3-beta-4 (CHRNA6/CHRNA3-CHRNB4), alpha-4-beta-2/CHRNA4-CHRNB2, alpha-4-beta-4/CHRNA4-CHRNB4, alpha-2-beta-4/CHRNA2-CHRNB4, alpha-3-beta-4/CHRNA3-CHRNB4). The toxin blockade is voltage-dependent, and its binding site does not overlap with the binding site of the competitive antagonist alpha-conotoxin RgIA. The toxin inhibits Sf9 cell growth. Both the bead and ribbon isomers relieve pain effects in the rat chronic constriction injury (CCI) model of neuropathic pain, and in the acute pain model of tail flick test, but have no effect on motor performance. This chain is Alpha-conotoxin GeXIVA, found in Conus generalis (General cone).